The sequence spans 83 residues: Small ribosomal subunit protein bS20 (83 aa).

This sequence belongs to the bacterial ribosomal protein bS20 family.

Functionally, binds directly to 16S ribosomal RNA. The chain is Small ribosomal subunit protein bS20 from Leuconostoc citreum (strain KM20).